Consider the following 358-residue polypeptide: Peptide chain release factor 1 (358 aa).

Gln-235 carries the N5-methylglutamine modification.

Belongs to the prokaryotic/mitochondrial release factor family. Post-translationally, methylated by PrmC. Methylation increases the termination efficiency of RF1.

Its subcellular location is the cytoplasm. Functionally, peptide chain release factor 1 directs the termination of translation in response to the peptide chain termination codons UAG and UAA. This is Peptide chain release factor 1 from Neisseria gonorrhoeae (strain ATCC 700825 / FA 1090).